The following is a 190-amino-acid chain: Threonylcarbamoyl-AMP synthase (190 aa).

The YrdC-like domain occupies 7-190 (SQDVASLVIA…ALSGELIRQG (184 aa)).

Belongs to the SUA5 family. TsaC subfamily.

The protein localises to the cytoplasm. It catalyses the reaction L-threonine + hydrogencarbonate + ATP = L-threonylcarbamoyladenylate + diphosphate + H2O. Its function is as follows. Required for the formation of a threonylcarbamoyl group on adenosine at position 37 (t(6)A37) in tRNAs that read codons beginning with adenine. Catalyzes the conversion of L-threonine, HCO(3)(-)/CO(2) and ATP to give threonylcarbamoyl-AMP (TC-AMP) as the acyladenylate intermediate, with the release of diphosphate. The sequence is that of Threonylcarbamoyl-AMP synthase from Sodalis glossinidius (strain morsitans).